The sequence spans 218 residues: Thiopurine S-methyltransferase (218 aa).

The S-adenosyl-L-methionine site is built by tryptophan 10, leucine 45, glutamate 66, and arginine 123.

It belongs to the class I-like SAM-binding methyltransferase superfamily. TPMT family.

The protein resides in the cytoplasm. It catalyses the reaction S-adenosyl-L-methionine + a thiopurine = S-adenosyl-L-homocysteine + a thiopurine S-methylether.. This Shewanella oneidensis (strain ATCC 700550 / JCM 31522 / CIP 106686 / LMG 19005 / NCIMB 14063 / MR-1) protein is Thiopurine S-methyltransferase.